The following is a 94-amino-acid chain: Aspartyl/glutamyl-tRNA(Asn/Gln) amidotransferase subunit C (94 aa).

The protein belongs to the GatC family. Heterotrimer of A, B and C subunits.

It catalyses the reaction L-glutamyl-tRNA(Gln) + L-glutamine + ATP + H2O = L-glutaminyl-tRNA(Gln) + L-glutamate + ADP + phosphate + H(+). It carries out the reaction L-aspartyl-tRNA(Asn) + L-glutamine + ATP + H2O = L-asparaginyl-tRNA(Asn) + L-glutamate + ADP + phosphate + 2 H(+). In terms of biological role, allows the formation of correctly charged Asn-tRNA(Asn) or Gln-tRNA(Gln) through the transamidation of misacylated Asp-tRNA(Asn) or Glu-tRNA(Gln) in organisms which lack either or both of asparaginyl-tRNA or glutaminyl-tRNA synthetases. The reaction takes place in the presence of glutamine and ATP through an activated phospho-Asp-tRNA(Asn) or phospho-Glu-tRNA(Gln). The sequence is that of Aspartyl/glutamyl-tRNA(Asn/Gln) amidotransferase subunit C from Syntrophomonas wolfei subsp. wolfei (strain DSM 2245B / Goettingen).